A 690-amino-acid chain; its full sequence is Eukaryotic translation initiation factor 3 subunit B (690 aa).

The segment covering 1 to 11 (MAKKKSEDHSG) has biased composition (basic and acidic residues). The interval 1-33 (MAKKKSEDHSGADANDSDYNEEPNFDDPPNFVD) is disordered. Over residues 15-25 (NDSDYNEEPNF) the composition is skewed to acidic residues. Residues 57–141 (SVVVVDNMPK…YTFAVNLFTD (85 aa)) form the RRM domain. WD repeat units lie at residues 207 to 246 (TRER…KIQK), 292 to 331 (GDGM…LLDL), 334 to 369 (IKIP…TLMK), 442 to 484 (EIRE…KPSL), and 530 to 575 (PDHF…IKRT). Positions 613–646 (EQKDRLRLTRASKELLEKRAQLRETFMEYRNKRI) form a coiled coil.

It belongs to the eIF-3 subunit B family. Component of the eukaryotic translation initiation factor 3 (eIF-3) complex. The eIF-3 complex interacts with pix. Interacts with mxt.

It localises to the cytoplasm. Functionally, RNA-binding component of the eukaryotic translation initiation factor 3 (eIF-3) complex, which is involved in protein synthesis of a specialized repertoire of mRNAs and, together with other initiation factors, stimulates binding of mRNA and methionyl-tRNAi to the 40S ribosome. The eIF-3 complex specifically targets and initiates translation of a subset of mRNAs involved in cell proliferation. This is Eukaryotic translation initiation factor 3 subunit B from Drosophila grimshawi (Hawaiian fruit fly).